We begin with the raw amino-acid sequence, 141 residues long: MWVLGIAATFCGLFWLPGLALQIQCYQCEEFQLNNDCSSPEFIVNCTVNVQDMCQKEVMEQSAGIMYRKSCASSAACLIASAGYQSFCSPGKLNSVCISCCNTPLCNGPRPKKRGSSASAIRPELFTTVLFFNLALCLAHC.

The first 20 residues, 1–20, serve as a signal peptide directing secretion; it reads MWVLGIAATFCGLFWLPGLA. Disulfide bonds link cysteine 25-cysteine 54, cysteine 28-cysteine 37, cysteine 46-cysteine 71, cysteine 77-cysteine 100, cysteine 88-cysteine 97, and cysteine 101-cysteine 106. The 84-residue stretch at 25-108 folds into the UPAR/Ly6 domain; it reads CYQCEEFQLN…SCCNTPLCNG (84 aa). N-linked (GlcNAc...) asparagine glycosylation is present at asparagine 45. Glycine 115 carries GPI-anchor amidated glycine lipidation. A propeptide spans 116-141 (removed in mature form); that stretch reads SSASAIRPELFTTVLFFNLALCLAHC.

In terms of assembly, interacts with CHRNA4 and nAChRs containing alpha-4:beta-2 (CHRNA4:CHRNB2) and alpha-7 (CHRNA7) subunits.

Its subcellular location is the cell membrane. Believed to act as a modulator of nicotinic acetylcholine receptors (nAChRs) activity. In vitro increases receptor desensitization and decreases affinity for ACh of alpha-4:beta-2-containing nAChRs. May play a role in the intracellular trafficking of alpha-4:beta-2 and alpha-7-containing nAChRs and may inhibit their expression at the cell surface. May be involved in the control of anxiety. This is Ly6/PLAUR domain-containing protein 1 (Lypd1) from Rattus norvegicus (Rat).